Consider the following 299-residue polypeptide: Probable inactive heme oxygenase 2, chloroplastic (299 aa).

A compositionally biased stretch (low complexity) spans 1–15 (MASLLRPTPLLSTPR). 3 disordered regions span residues 1–20 (MASLLRPTPLLSTPRKLTHS), 45–70 (LCRSTPTPSQQKASQRKRTRYRKQYP), and 96–126 (DLSEDKTDTEKEEEEEEEDDDDDDEVKEETW). The N-terminal 83 residues, 1-83 (MASLLRPTPL…IGITEEMRFV (83 aa)), are a transit peptide targeting the chloroplast. The span at 46 to 57 (CRSTPTPSQQKA) shows a compositional bias: polar residues. Residues 58–67 (SQRKRTRYRK) are compositionally biased toward basic residues. Residues 105 to 122 (EKEEEEEEEDDDDDDEVK) show a composition bias toward acidic residues.

The protein belongs to the heme oxygenase family. In terms of tissue distribution, widely expressed at low levels.

The protein resides in the plastid. Its subcellular location is the chloroplast. In terms of biological role, probable inactive heme oxygenase. Binds protoporphyrin IX, a precursor for both heme and chlorophyll biosynthesis. Plays a minor role in phytochrome assembly and photomorphogenesis. The sequence is that of Probable inactive heme oxygenase 2, chloroplastic (HO2) from Arabidopsis thaliana (Mouse-ear cress).